A 484-amino-acid polypeptide reads, in one-letter code: ATP synthase subunit beta (484 aa).

156 to 163 (GGAGVGKT) lines the ATP pocket.

Belongs to the ATPase alpha/beta chains family. F-type ATPases have 2 components, CF(1) - the catalytic core - and CF(0) - the membrane proton channel. CF(1) has five subunits: alpha(3), beta(3), gamma(1), delta(1), epsilon(1). CF(0) has three main subunits: a(1), b(2) and c(9-12). The alpha and beta chains form an alternating ring which encloses part of the gamma chain. CF(1) is attached to CF(0) by a central stalk formed by the gamma and epsilon chains, while a peripheral stalk is formed by the delta and b chains.

Its subcellular location is the cell inner membrane. The catalysed reaction is ATP + H2O + 4 H(+)(in) = ADP + phosphate + 5 H(+)(out). In terms of biological role, produces ATP from ADP in the presence of a proton gradient across the membrane. The catalytic sites are hosted primarily by the beta subunits. The protein is ATP synthase subunit beta of Rhizorhabdus wittichii (strain DSM 6014 / CCUG 31198 / JCM 15750 / NBRC 105917 / EY 4224 / RW1) (Sphingomonas wittichii).